The primary structure comprises 166 residues: Protein-export protein SecB (166 aa).

It belongs to the SecB family. As to quaternary structure, homotetramer, a dimer of dimers. One homotetramer interacts with 1 SecA dimer.

The protein resides in the cytoplasm. In terms of biological role, one of the proteins required for the normal export of preproteins out of the cell cytoplasm. It is a molecular chaperone that binds to a subset of precursor proteins, maintaining them in a translocation-competent state. It also specifically binds to its receptor SecA. This Actinobacillus succinogenes (strain ATCC 55618 / DSM 22257 / CCUG 43843 / 130Z) protein is Protein-export protein SecB.